The chain runs to 174 residues: Gamma-crystallin A (174 aa).

Beta/gamma crystallin 'Greek key' domains lie at 2 to 40 and 41 to 83; these read GKIT…RVDS and GCWM…RIIP. Residues 84-87 form a connecting peptide region; sequence HTSS. Beta/gamma crystallin 'Greek key' domains follow at residues 88-128 and 129-171; these read HKLR…HVLE and GCWV…RRVT.

This sequence belongs to the beta/gamma-crystallin family. Monomer.

Crystallins are the dominant structural components of the vertebrate eye lens. This chain is Gamma-crystallin A (CRYGA), found in Homo sapiens (Human).